The chain runs to 258 residues: Small ribosomal subunit protein uS2 (258 aa).

This sequence belongs to the universal ribosomal protein uS2 family.

In Streptococcus suis (strain 05ZYH33), this protein is Small ribosomal subunit protein uS2.